The primary structure comprises 100 residues: Urease subunit gamma 1 (100 aa).

The protein belongs to the urease gamma subunit family. Heterotrimer of UreA (gamma), UreB (beta) and UreC (alpha) subunits. Three heterotrimers associate to form the active enzyme.

Its subcellular location is the cytoplasm. The catalysed reaction is urea + 2 H2O + H(+) = hydrogencarbonate + 2 NH4(+). The protein operates within nitrogen metabolism; urea degradation; CO(2) and NH(3) from urea (urease route): step 1/1. Functionally, disruption of the ure1 gene cluster suggests that it protects brucellae during their passage through the stomach. The major route of infection in human brucellosis is oral. The chain is Urease subunit gamma 1 from Brucella abortus (strain 2308).